The chain runs to 79 residues: Conotoxin Tr6.2 (79 aa).

The first 22 residues, 1–22 (MKLTCVLIISVLFLTASQLITA), serve as a signal peptide directing secretion. The propeptide occupies 23–47 (VYSRDKQQYRAARLRDEMRNLKGAR). 3 disulfide bridges follow: Cys49/Cys62, Cys56/Cys67, and Cys61/Cys77. Residues Pro60 and Pro63 each carry the 4-hydroxyproline modification.

It belongs to the conotoxin O1 superfamily. Expressed by the venom duct.

It is found in the secreted. Ion channel inhibitor that inhibits the increase in intracellular calcium upon depolarization in DRG neurons. In vivo, both intraperitoneal and intracranial injections into mice induce hyperactivity. The protein is Conotoxin Tr6.2 of Conus terebra (Sea snail).